The following is a 109-amino-acid chain: Large ribosomal subunit protein P1 (109 aa).

The segment at 71–109 is disordered; that stretch reads APAAASSAPAKKEEPKKEEPKKEEPKEEETDMDMGDLFG. The span at 80–95 shows a compositional bias: basic and acidic residues; it reads AKKEEPKKEEPKKEEP. 3 consecutive repeat copies span residues 81–85, 86–90, and 91–95. The tract at residues 81–95 is 3 X 5 AA tandem repeats of K-K-E-E-P; it reads KKEEPKKEEPKKEEP. The segment covering 96–109 has biased composition (acidic residues); the sequence is KEEETDMDMGDLFG.

It belongs to the eukaryotic ribosomal protein P1/P2 family. In terms of processing, not phosphorylated.

The sequence is that of Large ribosomal subunit protein P1 (RPLP1) from Tetrahymena thermophila.